The sequence spans 101 residues: MAKKSSVEKNNRRQRMVKNAAAKRARLKAIIADKTKPMEERFAATMKLAEMPRNSSATRIKNRCEISGRPHSVYRKTKMSRIAIRDFGSRGLIPGLVKSSW.

A compositionally biased stretch (basic and acidic residues) spans 1–11 (MAKKSSVEKNN). Positions 1-22 (MAKKSSVEKNNRRQRMVKNAAA) are disordered. Residues 12–22 (RRQRMVKNAAA) show a composition bias toward basic residues.

Belongs to the universal ribosomal protein uS14 family. As to quaternary structure, part of the 30S ribosomal subunit. Contacts proteins S3 and S10.

Its function is as follows. Binds 16S rRNA, required for the assembly of 30S particles and may also be responsible for determining the conformation of the 16S rRNA at the A site. The sequence is that of Small ribosomal subunit protein uS14 from Afipia carboxidovorans (strain ATCC 49405 / DSM 1227 / KCTC 32145 / OM5) (Oligotropha carboxidovorans).